Reading from the N-terminus, the 625-residue chain is DELLA protein SLR1 (625 aa).

Residues 1–34 (MKREYQEAGGSSGGGSSADMGSCKDKVMAGAAGE) form a disordered region. The short motif at 39-43 (DELLA) is the DELLA motif element. Residues 167–209 (TADPSAADSARDTKRMRTGGGSTSSSSSSSSSLGGGASRGSVV) form a disordered region. Over residues 189–198 (TSSSSSSSSS) the composition is skewed to low complexity. The GRAS domain maps to 232 to 621 (VDTQEAGIRL…RPLIATSAWR (390 aa)). The segment at 239-294 (IRLVHALLACAEAVQQENFAAAEALVKQIPTLAASQGGAMRKVAAYFGEALARRVY) is leucine repeat I (LRI). The segment at 241 to 278 (LVHALLACAEAVQQENFAAAEALVKQIPTLAASQGGAM) is required for possible homodimerization. The LxCxE motif motif lies at 246–250 (LACAE). A VHIID region spans residues 313–378 (HAHFYESCPY…GGPPSFRLTG (66 aa)). The VHIID motif lies at 344–348 (VHVVD). Residues 392–431 (QVGWKLAQFAHTIRVDFQYRGLVAATLADLEPFMLQPEGE) are leucine repeat II (LRII). The PFYRE stretch occupies residues 441-542 (IAVNSVFELH…EVYLGRQICN (102 aa)). Residues 449–453 (LHRLL) carry the LXXLL motif motif. Positions 545–621 (ACEGAERTER…RPLIATSAWR (77 aa)) are SAW.

This sequence belongs to the GRAS family. DELLA subfamily. In terms of assembly, may be a homodimer. Interacts directly with the GID2 component of the SCF(GID2) complex. Interacts with GID1 in a GA-dependent manner, probably leading to its interaction with GID2 and its subsequent degradation. Interacts with D14 and GID1 in an strigolactone-dependent manner. Interacts with HD16/EL1. Post-translationally, phosphorylated on Ser/Thr residues in the N-terminal part. Both phosphorylated and unphosphorylated forms are degraded upon GA treatment, suggesting that phosphorylation does not trigger ubiquitination. Phosphorylated by HD16/EL1. Phosphorylation enhances its stability. Ubiquitinated. Upon GA application it is ubiquitinated by the SCF(GID2) complex, leading to its subsequent degradation. In terms of tissue distribution, expressed in nodes, internodes, leaf sheats of young seedlings and ears of adult plants. Weakly expressed in leaf blade and root.

It is found in the nucleus. Functionally, probable transcriptional regulator that acts as a repressor of the gibberellin (GA) signaling pathway. Probably acts by participating in large multiprotein complexes that repress transcription of GA-inducible genes. Upon GA application, it is degraded by the proteasome, allowing the GA signaling pathway. In contrast, its overexpression prevents the GA signaling pathway and induces a dwarf phenotype. This Oryza sativa subsp. japonica (Rice) protein is DELLA protein SLR1.